A 208-amino-acid polypeptide reads, in one-letter code: MSKVLFVKGNPRSVDESVSVKMYQTFVDTYKEANPNDEVIELDIYNEQLPYLDSTMLAGIFKAGQQLELTAEEEEARKVADRYLTQFVEADKVVFAFPLWNFTIPAALHTYMDYLARAGVTFNYTAEGPVGLMGDKKVALLNARGGYYSEGPAAQLEMSLNYMKTMVGFFGVQDPVTVVIEGHNAVPDQAEEIINKGLEEVKKVAQSF.

17–19 is a binding site for FMN; sequence SVS.

Belongs to the azoreductase type 1 family. As to quaternary structure, homodimer. FMN is required as a cofactor.

It catalyses the reaction 2 a quinone + NADH + H(+) = 2 a 1,4-benzosemiquinone + NAD(+). The enzyme catalyses N,N-dimethyl-1,4-phenylenediamine + anthranilate + 2 NAD(+) = 2-(4-dimethylaminophenyl)diazenylbenzoate + 2 NADH + 2 H(+). Quinone reductase that provides resistance to thiol-specific stress caused by electrophilic quinones. Functionally, also exhibits azoreductase activity. Catalyzes the reductive cleavage of the azo bond in aromatic azo compounds to the corresponding amines. The polypeptide is FMN-dependent NADH:quinone oxidoreductase 2 (Halalkalibacterium halodurans (strain ATCC BAA-125 / DSM 18197 / FERM 7344 / JCM 9153 / C-125) (Bacillus halodurans)).